The primary structure comprises 355 residues: Capsular polysaccharide biosynthesis glycosyltransferase CapH (355 aa).

Belongs to the glycosyltransferase group 1 family. Glycosyltransferase 4 subfamily.

It functions in the pathway capsule biogenesis; capsule polysaccharide biosynthesis. Functionally, required for the biosynthesis of type 1 capsular polysaccharide. This Staphylococcus aureus protein is Capsular polysaccharide biosynthesis glycosyltransferase CapH (capH).